The sequence spans 35 residues: Photosystem II reaction center protein T (35 aa).

The helical transmembrane segment at 3–23 (ALVYTFLLVSTLGIIFFAIFF) threads the bilayer.

Belongs to the PsbT family. As to quaternary structure, PSII is composed of 1 copy each of membrane proteins PsbA, PsbB, PsbC, PsbD, PsbE, PsbF, PsbH, PsbI, PsbJ, PsbK, PsbL, PsbM, PsbT, PsbY, PsbZ, Psb30/Ycf12, at least 3 peripheral proteins of the oxygen-evolving complex and a large number of cofactors. It forms dimeric complexes.

Its subcellular location is the plastid. It localises to the chloroplast thylakoid membrane. Functionally, found at the monomer-monomer interface of the photosystem II (PS II) dimer, plays a role in assembly and dimerization of PSII. PSII is a light-driven water plastoquinone oxidoreductase, using light energy to abstract electrons from H(2)O, generating a proton gradient subsequently used for ATP formation. The polypeptide is Photosystem II reaction center protein T (Cedrus deodara (Deodar cedar)).